A 342-amino-acid chain; its full sequence is Heat-inducible transcription repressor HrcA (342 aa).

The protein belongs to the HrcA family.

In terms of biological role, negative regulator of class I heat shock genes (grpE-dnaK-dnaJ and groELS operons). Prevents heat-shock induction of these operons. In Onion yellows phytoplasma (strain OY-M), this protein is Heat-inducible transcription repressor HrcA.